Consider the following 110-residue polypeptide: Cytochrome c6 (110 aa).

An N-terminal signal peptide occupies residues 1–25 (MKKTLSVLFTAFSFCVIGFTQVAFA). Positions 39, 42, 43, and 83 each coordinate heme c.

Belongs to the cytochrome c family. PetJ subfamily. As to quaternary structure, monomer. Binds 1 heme c group covalently per subunit.

The protein resides in the plastid. It is found in the chloroplast thylakoid lumen. Functions as an electron carrier between membrane-bound cytochrome b6-f and photosystem I in oxygenic photosynthesis. The protein is Cytochrome c6 (petJ) of Porphyra purpurea (Red seaweed).